The primary structure comprises 260 residues: MSHHWGYDSHNGPAHWHEHFPIANGERQSPIAISTKAARYDPALKPLSFSYDAGTAKAIVNNGHSFNVEFDDSSDKSVLQGGALDGVYRLVQFHIHWGSCEGQGSEHTVDGVKYDAELHIVHWNVKYGKFAEALKHPDGLAVVGIFMKVGNAKPEIQKVVDALNSIQTKGKQASFTNFDPTGLLPPCRDYWTYPGSLTTPPLHECVIWHVLKEPITVSSEQMCKLRGLCFSAENEPVCRMVDNWRPCQPLKSREVRASFQ.

The region spanning 3–259 is the Alpha-carbonic anhydrase domain; the sequence is HHWGYDSHNG…LKSREVRASF (257 aa). Histidine 64 serves as the catalytic Proton donor/acceptor. Zn(2+) is bound by residues histidine 94, histidine 96, and histidine 119. Residue 198–199 coordinates substrate; that stretch reads TT.

This sequence belongs to the alpha-carbonic anhydrase family. Zn(2+) serves as cofactor.

Its subcellular location is the cytoplasm. The protein resides in the cell membrane. The catalysed reaction is hydrogencarbonate + H(+) = CO2 + H2O. The enzyme catalyses urea = cyanamide + H2O. With respect to regulation, inhibited by acetazolamide. In terms of biological role, catalyzes the reversible hydration of carbon dioxide. Can also hydrate cyanamide to urea. This Gallus gallus (Chicken) protein is Carbonic anhydrase 2 (CA2).